The following is a 251-amino-acid chain: CDP-diacylglycerol pyrophosphatase (251 aa).

Residues 4 to 24 (AGLLFLVMIVIAVVAAGIGYW) form a helical membrane-spanning segment.

It belongs to the Cdh family.

Its subcellular location is the cell inner membrane. It catalyses the reaction a CDP-1,2-diacyl-sn-glycerol + H2O = a 1,2-diacyl-sn-glycero-3-phosphate + CMP + 2 H(+). It functions in the pathway phospholipid metabolism; CDP-diacylglycerol degradation; phosphatidate from CDP-diacylglycerol: step 1/1. The polypeptide is CDP-diacylglycerol pyrophosphatase (Escherichia coli O9:H4 (strain HS)).